The following is a 287-amino-acid chain: Maleylpyruvate hydrolase (287 aa).

Positions 143, 145, and 174 each coordinate a divalent metal cation.

It belongs to the FAH family. Homodimer.

It carries out the reaction 3-maleylpyruvate + H2O = maleate + pyruvate + H(+). Activated by Mn(2+). Inhibited by Ni(2+), Cd(2+), Co(2+) or Cu(2+). In terms of biological role, involved in the degradation of gentisate. Catalyzes the hydrolysis of 3-maleylpyruvate, the ring-cleavage product of gentisate. In Aquipseudomonas alcaligenes (Pseudomonas alcaligenes), this protein is Maleylpyruvate hydrolase.